Reading from the N-terminus, the 129-residue chain is Large ribosomal subunit protein bL12 (129 aa).

This sequence belongs to the bacterial ribosomal protein bL12 family. In terms of assembly, homodimer. Part of the ribosomal stalk of the 50S ribosomal subunit. Forms a multimeric L10(L12)X complex, where L10 forms an elongated spine to which 2 to 4 L12 dimers bind in a sequential fashion. Binds GTP-bound translation factors.

Its function is as follows. Forms part of the ribosomal stalk which helps the ribosome interact with GTP-bound translation factors. Is thus essential for accurate translation. The chain is Large ribosomal subunit protein bL12 from Mycobacteroides abscessus (strain ATCC 19977 / DSM 44196 / CCUG 20993 / CIP 104536 / JCM 13569 / NCTC 13031 / TMC 1543 / L948) (Mycobacterium abscessus).